The primary structure comprises 341 residues: N-acetyl-gamma-glutamyl-phosphate reductase (341 aa).

Cys-148 is a catalytic residue.

The protein belongs to the NAGSA dehydrogenase family. Type 1 subfamily.

The protein localises to the cytoplasm. It catalyses the reaction N-acetyl-L-glutamate 5-semialdehyde + phosphate + NADP(+) = N-acetyl-L-glutamyl 5-phosphate + NADPH + H(+). It functions in the pathway amino-acid biosynthesis; L-arginine biosynthesis; N(2)-acetyl-L-ornithine from L-glutamate: step 3/4. In terms of biological role, catalyzes the NADPH-dependent reduction of N-acetyl-5-glutamyl phosphate to yield N-acetyl-L-glutamate 5-semialdehyde. In Pseudothermotoga lettingae (strain ATCC BAA-301 / DSM 14385 / NBRC 107922 / TMO) (Thermotoga lettingae), this protein is N-acetyl-gamma-glutamyl-phosphate reductase.